Reading from the N-terminus, the 195-residue chain is NADH dehydrogenase [ubiquinone] iron-sulfur protein 3 (195 aa).

This sequence belongs to the complex I 30 kDa subunit family. As to quaternary structure, complex I is composed of about 45 different subunits. This is a component of the iron-sulfur (IP) fragment of the enzyme.

Its subcellular location is the mitochondrion inner membrane. It catalyses the reaction a ubiquinone + NADH + 5 H(+)(in) = a ubiquinol + NAD(+) + 4 H(+)(out). Core subunit of the mitochondrial membrane respiratory chain NADH dehydrogenase (Complex I) that is believed to belong to the minimal assembly required for catalysis. Complex I functions in the transfer of electrons from NADH to the respiratory chain. The immediate electron acceptor for the enzyme is believed to be ubiquinone. In Marchantia polymorpha (Common liverwort), this protein is NADH dehydrogenase [ubiquinone] iron-sulfur protein 3 (NAD9).